The sequence spans 705 residues: MLKLFSAFRKDKIWDFDGGIHPPEMKTQSNGTPLRQVPLAPRFIIPLKQHIGAEGELCVNVGDRVLRGQPLTRGRGRMLPVHAPTSGKVIAITPHSTAHPSALAELSVMIDADGEDRWIERDGWADYQRRSREELITRIHQFGVAGLGGAGFPTGVKLQGGGDKIETLIINAAECEPYITADDRLMQDCAAQVVEGIRILAHILQPREVLIGIEDNKPQAISMLRAVLADAHDIALRVIPTKYPSGGAKQLTQILTGKQVPHGGRSSDIGVLMQNVGTAYAVKRAVIDGEPITERVVTLTGESVSRPGNVWARLGTPVSHLLNDAGFCSSADQMVIMGGPLMGFTLPWLDVPVVKITNCLLAPSATEMGETPEEQGCIRCSACADACPADLLPQQLYWFSKGQQHDKATAHNIADCIECGACAWVCPSSIPLVQYFRQEKAEIYAIAQEEKRAAEAKARFEARQARLEREKAARLERHKNAAAQPAAKDQDAIAAALARVKEKQAQATQPVVINAGEKPDNSAVIAAREARKAQARARQAENIPAATEPVEPVDPRKAAVEAAIARAKARKQEQQTAAEPTEPVDPRKAAVEAAIARAKARKQEQQTAAEPTEPVDPRKAAVEAAIARAKARKQEQQAAAEPTEPVDPRKAAVEAAIARAKARKQEQQAAAEPAEPVDPRKAAVAAAIARVQAKKAAQQQVVNEE.

2 consecutive 4Fe-4S ferredoxin-type domains span residues 368-397 (MGET…QQLY) and 407-435 (KATA…LVQY). Cys377, Cys380, Cys383, Cys387, Cys416, Cys419, Cys422, and Cys426 together coordinate [4Fe-4S] cluster. The segment at 536–684 (RARQAENIPA…EPVDPRKAAV (149 aa)) is disordered.

It belongs to the 4Fe4S bacterial-type ferredoxin family. RnfC subfamily. The complex is composed of six subunits: RnfA, RnfB, RnfC, RnfD, RnfE and RnfG. It depends on [4Fe-4S] cluster as a cofactor.

It is found in the cell inner membrane. In terms of biological role, part of a membrane-bound complex that couples electron transfer with translocation of ions across the membrane. The protein is Ion-translocating oxidoreductase complex subunit C of Citrobacter koseri (strain ATCC BAA-895 / CDC 4225-83 / SGSC4696).